The chain runs to 385 residues: FAD-dependent monooxygenase verC2 (385 aa).

3 residues coordinate FAD: R27, D227, and A240. N320 carries N-linked (GlcNAc...) asparagine glycosylation. Residues 365–385 form a helical membrane-spanning segment; the sequence is WKTTIMFIALLTIVVLIYSFI.

The protein belongs to the paxM FAD-dependent monooxygenase family. It depends on FAD as a cofactor.

It is found in the membrane. Its pathway is secondary metabolite biosynthesis; terpenoid biosynthesis. The protein operates within mycotoxin biosynthesis. Functionally, FAD-dependent monooxygenase; part of the gene cluster that mediates the biosynthesis of the neurotoxin verrucosidin, a methylated alpha-pyrone polyketide that inhibits oxidative phosphorylation in mitochondria and thereby causes neurological diseases. The carbon backbone of verrucosidin is synthesized by the HR-PKS verA, and further modified by the other verrucodidin cluster enzymes. This chain is FAD-dependent monooxygenase verC2, found in Penicillium polonicum.